Consider the following 457-residue polypeptide: Asparagine--tRNA ligase (457 aa).

Belongs to the class-II aminoacyl-tRNA synthetase family. In terms of assembly, homodimer.

It is found in the cytoplasm. It catalyses the reaction tRNA(Asn) + L-asparagine + ATP = L-asparaginyl-tRNA(Asn) + AMP + diphosphate + H(+). The sequence is that of Asparagine--tRNA ligase from Phytoplasma australiense.